Here is a 230-residue protein sequence, read N- to C-terminus: Probable tetraspanin tspD (230 aa).

At 1–20 (MVEYLPSTPRYLKVPLIILN) the chain is on the cytoplasmic side. A helical transmembrane segment spans residues 21–41 (VILWLLGLVLVIIGGICVGFF). At 42-65 (SRFKELQEVGGVSESIKSISVSLP) the chain is on the extracellular side. Residues 66–86 (AGVLSIGIFFMVLTVAGCIVA) form a helical membrane-spanning segment. Residues 87–90 (YKEK) lie on the Cytoplasmic side of the membrane. A helical membrane pass occupies residues 91–111 (MVGLVFYTILMLVLLVVLIGI). Residues 112-200 (GGEALTYHNA…VNSKLYLVGS (89 aa)) are Extracellular-facing. N-linked (GlcNAc...) asparagine glycosylation is found at Asn-133, Asn-138, Asn-163, and Asn-179. The chain crosses the membrane as a helical span at residues 201-221 (AGVAIGVIELVSLMFALFLIV). Topologically, residues 222–230 (RLYKSNSYR) are cytoplasmic.

This sequence belongs to the tetraspanin (TM4SF) family.

It is found in the membrane. This Dictyostelium discoideum (Social amoeba) protein is Probable tetraspanin tspD (tspD).